A 207-amino-acid polypeptide reads, in one-letter code: Imidazoleglycerol-phosphate dehydratase (207 aa).

The protein belongs to the imidazoleglycerol-phosphate dehydratase family.

It is found in the cytoplasm. The catalysed reaction is D-erythro-1-(imidazol-4-yl)glycerol 3-phosphate = 3-(imidazol-4-yl)-2-oxopropyl phosphate + H2O. The protein operates within amino-acid biosynthesis; L-histidine biosynthesis; L-histidine from 5-phospho-alpha-D-ribose 1-diphosphate: step 6/9. The sequence is that of Imidazoleglycerol-phosphate dehydratase (hisB) from Azospirillum brasilense.